The primary structure comprises 693 residues: Protein-glutamine gamma-glutamyltransferase E (693 aa).

Ala2 is modified (N-acetylalanine). A Phosphotyrosine modification is found at Tyr111. Residue Thr112 is modified to Phosphothreonine. The Ca(2+) site is built by Ala222, Asn225, Asn227, Asp228, and Asn230. Cys273 is a catalytic residue. The Ca(2+) site is built by Asp302, Asp304, Asn306, Ser308, and Asp325. Active-site residues include His331 and Asp354. Ca(2+) contacts are provided by Asn394, Ser416, Glu444, and Glu449.

It belongs to the transglutaminase superfamily. Transglutaminase family. In terms of assembly, consists of two polypeptide chains, which are synthesized as a precursor form of a single polypeptide. It depends on Ca(2+) as a cofactor. Post-translationally, activated by proteolytic processing. In vitro activation is commonly achieved by cleavage with dispase, a neutral bacterial protease. Dispase cleavage site was proposed to lie between Ser-470 and Ser-471 or between Pro-465 and Phe-466. Physiological activation may be catalyzed by CTSL and, to a lesser extent, by CTSS, but not by CTSB, CTSD nor CTSV.

Its subcellular location is the cytoplasm. The catalysed reaction is L-glutaminyl-[protein] + L-lysyl-[protein] = [protein]-L-lysyl-N(6)-5-L-glutamyl-[protein] + NH4(+). In terms of biological role, catalyzes the calcium-dependent formation of isopeptide cross-links between glutamine and lysine residues in various proteins, as well as the conjugation of polyamines to proteins. Involved in the formation of the cornified envelope (CE), a specialized component consisting of covalent cross-links of proteins beneath the plasma membrane of terminally differentiated keratinocytes. Catalyzes small proline-rich proteins (SPRR1 and SPRR2) and LOR cross-linking to form small interchain oligomers, which are further cross-linked by TGM1 onto the growing CE scaffold. In hair follicles, involved in cross-linking structural proteins to hardening the inner root sheath. The sequence is that of Protein-glutamine gamma-glutamyltransferase E (TGM3) from Homo sapiens (Human).